A 43-amino-acid polypeptide reads, in one-letter code: Cytochrome b559 subunit beta (43 aa).

The helical transmembrane segment at 18–34 threads the bilayer; the sequence is WLAIHGLAIPTVFFFGA. His-22 contacts heme.

Belongs to the PsbE/PsbF family. In terms of assembly, heterodimer of an alpha subunit and a beta subunit. PSII is composed of 1 copy each of membrane proteins PsbA, PsbB, PsbC, PsbD, PsbE, PsbF, PsbH, PsbI, PsbJ, PsbK, PsbL, PsbM, PsbT, PsbY, PsbZ, Psb30/Ycf12, at least 3 peripheral proteins of the oxygen-evolving complex and a large number of cofactors. It forms dimeric complexes. Heme b serves as cofactor.

Its subcellular location is the plastid. It localises to the chloroplast thylakoid membrane. Its function is as follows. This b-type cytochrome is tightly associated with the reaction center of photosystem II (PSII). PSII is a light-driven water:plastoquinone oxidoreductase that uses light energy to abstract electrons from H(2)O, generating O(2) and a proton gradient subsequently used for ATP formation. It consists of a core antenna complex that captures photons, and an electron transfer chain that converts photonic excitation into a charge separation. The polypeptide is Cytochrome b559 subunit beta (Cyanidium caldarium (Red alga)).